A 321-amino-acid polypeptide reads, in one-letter code: MLNKLIERENLSFEESYELFNMLLNESEMRIAAYLVALQTKGVTADEIAGFAKAMRDNAVKIDLGEVTDTCGTGGDGSKTINVSTAVSIILSCFTKVAKHGNVSITSKSGSANVYEALGCKIPETPEDAKKSMDKTNFAFLFAPKYHPALKKIMPVRNELKVKTIFNILGPLANPANPKYQILGVNSPDLLDNVAIALSKVGGIKKALVLYGDGLDELTPNGTSKITEYNGKFETYEVTPKDFGLDYAKIMPCESPDESAKRLIDVFSGKLNEDRNFILMNAAAALYTSENASDFLDGVEIAKEAIESGKVLKKLEEIRNV.

Residues G72, 75 to 76, T80, 82 to 85, 99 to 107, and S111 each bind 5-phospho-alpha-D-ribose 1-diphosphate; these read GD, NVST, and KHGNVSITS. Residue G72 participates in anthranilate binding. S84 is a binding site for Mg(2+). N102 serves as a coordination point for anthranilate. Residue R157 participates in anthranilate binding. Mg(2+)-binding residues include D216 and E217.

It belongs to the anthranilate phosphoribosyltransferase family. As to quaternary structure, homodimer. It depends on Mg(2+) as a cofactor.

The enzyme catalyses N-(5-phospho-beta-D-ribosyl)anthranilate + diphosphate = 5-phospho-alpha-D-ribose 1-diphosphate + anthranilate. It participates in amino-acid biosynthesis; L-tryptophan biosynthesis; L-tryptophan from chorismate: step 2/5. In terms of biological role, catalyzes the transfer of the phosphoribosyl group of 5-phosphorylribose-1-pyrophosphate (PRPP) to anthranilate to yield N-(5'-phosphoribosyl)-anthranilate (PRA). In Methanococcus maripaludis (strain C7 / ATCC BAA-1331), this protein is Anthranilate phosphoribosyltransferase.